The chain runs to 313 residues: Biotin synthase (313 aa).

The Radical SAM core domain maps to 28–258; the sequence is NFGNDIELCS…LFPQARLRLS (231 aa). The [4Fe-4S] cluster site is built by Cys46, Cys50, and Cys53. [2Fe-2S] cluster contacts are provided by Cys90, Cys121, Cys181, and Arg256.

It belongs to the radical SAM superfamily. Biotin synthase family. As to quaternary structure, homodimer. The cofactor is [4Fe-4S] cluster. [2Fe-2S] cluster serves as cofactor.

It catalyses the reaction (4R,5S)-dethiobiotin + (sulfur carrier)-SH + 2 reduced [2Fe-2S]-[ferredoxin] + 2 S-adenosyl-L-methionine = (sulfur carrier)-H + biotin + 2 5'-deoxyadenosine + 2 L-methionine + 2 oxidized [2Fe-2S]-[ferredoxin]. It participates in cofactor biosynthesis; biotin biosynthesis; biotin from 7,8-diaminononanoate: step 2/2. Its function is as follows. Catalyzes the conversion of dethiobiotin (DTB) to biotin by the insertion of a sulfur atom into dethiobiotin via a radical-based mechanism. The chain is Biotin synthase from Francisella tularensis subsp. tularensis (strain FSC 198).